We begin with the raw amino-acid sequence, 199 residues long: Dephospho-CoA kinase (199 aa).

Residues 3-199 form the DPCK domain; the sequence is VLGLTGSIGM…AAAKMPRRRD (197 aa). 11–16 serves as a coordination point for ATP; it reads GMGKST.

This sequence belongs to the CoaE family.

It localises to the cytoplasm. The enzyme catalyses 3'-dephospho-CoA + ATP = ADP + CoA + H(+). It functions in the pathway cofactor biosynthesis; coenzyme A biosynthesis; CoA from (R)-pantothenate: step 5/5. Its function is as follows. Catalyzes the phosphorylation of the 3'-hydroxyl group of dephosphocoenzyme A to form coenzyme A. The sequence is that of Dephospho-CoA kinase from Rhodopseudomonas palustris (strain ATCC BAA-98 / CGA009).